We begin with the raw amino-acid sequence, 259 residues long: uncharacterized protein (259 aa).

Transmembrane regions (helical) follow at residues I55–I75, F85–S105, and F127–G147.

It localises to the membrane. This is an uncharacterized protein from Arabidopsis thaliana (Mouse-ear cress).